The chain runs to 92 residues: Small ribosomal subunit protein uS19 (92 aa).

Belongs to the universal ribosomal protein uS19 family.

Protein S19 forms a complex with S13 that binds strongly to the 16S ribosomal RNA. In Methylobacterium nodulans (strain LMG 21967 / CNCM I-2342 / ORS 2060), this protein is Small ribosomal subunit protein uS19.